Consider the following 795-residue polypeptide: Phenylalanine--tRNA ligase beta subunit (795 aa).

Positions Ala39–Arg148 constitute a tRNA-binding domain. The region spanning Pro401 to Asn476 is the B5 domain. 4 residues coordinate Mg(2+): Asp454, Asp460, Glu463, and Glu464. Positions Ser701–Arg794 constitute an FDX-ACB domain.

This sequence belongs to the phenylalanyl-tRNA synthetase beta subunit family. Type 1 subfamily. Tetramer of two alpha and two beta subunits. It depends on Mg(2+) as a cofactor.

The protein resides in the cytoplasm. The catalysed reaction is tRNA(Phe) + L-phenylalanine + ATP = L-phenylalanyl-tRNA(Phe) + AMP + diphosphate + H(+). The sequence is that of Phenylalanine--tRNA ligase beta subunit from Mannheimia succiniciproducens (strain KCTC 0769BP / MBEL55E).